A 447-amino-acid chain; its full sequence is Chitobiosyldiphosphodolichol beta-mannosyltransferase (447 aa).

At 1–8 (MSVFGFDN) the chain is on the lumenal side. Residues 9 to 29 (IPTWLWWLLAIYLATPFVLYV) form a helical membrane-spanning segment. The Cytoplasmic portion of the chain corresponds to 30–127 (VQPYLFYEGK…LCSMFWKLRA (98 aa)). Residues 128-148 (VDYILLQNPPTIPILPIAVVV) constitute an intramembrane region (helical). Topologically, residues 149 to 447 (KTFSRAKLII…ALSELKIIHK (299 aa)) are lumenal.

It belongs to the glycosyltransferase group 1 family.

The protein localises to the endoplasmic reticulum membrane. It catalyses the reaction an N,N'-diacetylchitobiosyl-diphospho-di-trans,poly-cis-dolichol + GDP-alpha-D-mannose = a beta-D-Man-(1-&gt;4)-beta-D-GlcNAc-(1-&gt;4)-alpha-D-GlcNAc-diphospho-di-trans,poly-cis-dolichol + GDP + H(+). Its pathway is protein modification; protein glycosylation. Its function is as follows. Participates in the formation of the lipid-linked precursor oligosaccharide for N-glycosylation. Involved in assembling the dolichol-pyrophosphate-GlcNAc(2)-Man(5) intermediate on the cytoplasmic surface of the ER. This chain is Chitobiosyldiphosphodolichol beta-mannosyltransferase (ALG1), found in Kluyveromyces lactis (strain ATCC 8585 / CBS 2359 / DSM 70799 / NBRC 1267 / NRRL Y-1140 / WM37) (Yeast).